Consider the following 197-residue polypeptide: dTTP/UTP pyrophosphatase (197 aa).

Residue aspartate 70 is the Proton acceptor of the active site.

The protein belongs to the Maf family. YhdE subfamily. Requires a divalent metal cation as cofactor.

The protein resides in the cytoplasm. It catalyses the reaction dTTP + H2O = dTMP + diphosphate + H(+). The catalysed reaction is UTP + H2O = UMP + diphosphate + H(+). In terms of biological role, nucleoside triphosphate pyrophosphatase that hydrolyzes dTTP and UTP. May have a dual role in cell division arrest and in preventing the incorporation of modified nucleotides into cellular nucleic acids. In Escherichia coli O157:H7, this protein is dTTP/UTP pyrophosphatase (yhdE).